Reading from the N-terminus, the 77-residue chain is Conotoxin LiC42 (77 aa).

Residues 1–22 form the signal peptide; sequence MKLTCVLIIAVLFLTASQLITA. Residues 23–47 constitute a propeptide that is removed on maturation; that stretch reads DYSRDKQEYGAERLRDAMGKFKGSR. Cystine bridges form between Cys49–Cys62, Cys56–Cys67, and Cys61–Cys76.

The protein belongs to the conotoxin O1 superfamily. In terms of tissue distribution, expressed by the venom duct.

The protein localises to the secreted. The chain is Conotoxin LiC42 from Conus lividus (Livid cone).